A 346-amino-acid polypeptide reads, in one-letter code: Protein Spea_1705 (346 aa).

Catalysis depends on cysteine 101, which acts as the Proton acceptor. Substrate-binding positions include 102–103, aspartate 262, and 267–268; these read GH and GT.

The protein belongs to the proline racemase family.

It carries out the reaction trans-3-hydroxy-L-proline = 1-pyrroline-2-carboxylate + H2O. In terms of biological role, in vitro, catalyzes the dehydration of trans-3-hydroxy-L-proline (t3LHyp) to Delta(1)-pyrroline-2-carboxylate (Pyr2C), albeit with very low efficiency. The physiological substrate may be different. Displays neither trans-4-hydroxy-L-proline (t4LHyp) epimerase nor proline racemase activity. The sequence is that of Protein Spea_1705 from Shewanella pealeana (strain ATCC 700345 / ANG-SQ1).